The primary structure comprises 163 residues: MELKIGSTEAPMEKATFGAGCFWGVEAAFRKVKGVVSTSVGYMGGHFPNPCYLDVLSRITGHAEVVQIEYDPQLVSYEDLLAVFWDIHDPTTLNRQGPDKGEQYRSVIFFHNEQQAEAAQQSKAKVQVSGRFELDIVTEIKHKSEYYLATEEHQQYFEKQAKR.

The active site involves C21.

The protein belongs to the MsrA Met sulfoxide reductase family.

The enzyme catalyses L-methionyl-[protein] + [thioredoxin]-disulfide + H2O = L-methionyl-(S)-S-oxide-[protein] + [thioredoxin]-dithiol. It carries out the reaction [thioredoxin]-disulfide + L-methionine + H2O = L-methionine (S)-S-oxide + [thioredoxin]-dithiol. Functionally, has an important function as a repair enzyme for proteins that have been inactivated by oxidation. Catalyzes the reversible oxidation-reduction of methionine sulfoxide in proteins to methionine. In Nostoc sp. (strain PCC 7120 / SAG 25.82 / UTEX 2576), this protein is Peptide methionine sulfoxide reductase MsrA 1 (msrA1).